Reading from the N-terminus, the 780-residue chain is ATP-dependent 6-phosphofructokinase, liver type (780 aa).

The residue at position 2 (A2) is an N-acetylalanine. The interval 2-390 (ATVDLEKLRM…NWKIYKLLAH (389 aa)) is N-terminal catalytic PFK domain 1. ATP contacts are provided by residues G25, 88 to 89 (RC), and 118 to 121 (GDGS). D119 is a binding site for Mg(2+). Substrate-binding positions include 164 to 166 (SID), R201, 208 to 210 (MGR), E264, R292, and 298 to 301 (HVQR). D166 (proton acceptor) is an active-site residue. S377 carries the post-translational modification Phosphoserine. The interval 391–400 (QKVSKEKSNF) is interdomain linker. Residues 401-780 (SLAILNVGAP…RRTLSIDKGF (380 aa)) are C-terminal regulatory PFK domain 2. Beta-D-fructose 2,6-bisphosphate-binding positions include R470, 527-531 (TISNN), R565, 572-574 (MGG), and E628. Residue S529 is glycosylated (O-linked (GlcNAc) serine). Phosphotyrosine is present on Y640. Residues R654, 660–663 (HLQQ), and R734 each bind beta-D-fructose 2,6-bisphosphate. S775 is modified (phosphoserine).

The protein belongs to the phosphofructokinase type A (PFKA) family. ATP-dependent PFK group I subfamily. Eukaryotic two domain clade 'E' sub-subfamily. In terms of assembly, homo- and heterotetramers. Phosphofructokinase (PFK) enzyme functions as a tetramer composed of different combinations of 3 types of subunits, called PFKM (M), PFKL (L) and PFKP (P). The composition of the PFK tetramer differs according to the tissue type it is present in. The kinetic and regulatory properties of the tetrameric enzyme are dependent on the subunit composition, hence can vary across tissues. Mg(2+) serves as cofactor. Post-translationally, glcNAcylation at Ser-529 by OGT decreases enzyme activity, leading to redirect glucose flux through the oxidative pentose phosphate pathway. Glycosylation is stimulated by both hypoxia and glucose deprivation.

It is found in the cytoplasm. It carries out the reaction beta-D-fructose 6-phosphate + ATP = beta-D-fructose 1,6-bisphosphate + ADP + H(+). It participates in carbohydrate degradation; glycolysis; D-glyceraldehyde 3-phosphate and glycerone phosphate from D-glucose: step 3/4. Allosterically activated by ADP, AMP, or fructose 2,6-bisphosphate, and allosterically inhibited by ATP or citrate. GlcNAcylation by OGT overcomes allosteric regulation. Catalyzes the phosphorylation of D-fructose 6-phosphate to fructose 1,6-bisphosphate by ATP, the first committing step of glycolysis. Negatively regulates the phagocyte oxidative burst in response to bacterial infection by controlling cellular NADPH biosynthesis and NADPH oxidase-derived reactive oxygen species. Upon macrophage activation, drives the metabolic switch toward glycolysis, thus preventing glucose turnover that produces NADPH via pentose phosphate pathway. This chain is ATP-dependent 6-phosphofructokinase, liver type, found in Mus musculus (Mouse).